We begin with the raw amino-acid sequence, 116 residues long: Large ribosomal subunit protein bL19 (116 aa).

It belongs to the bacterial ribosomal protein bL19 family.

Functionally, this protein is located at the 30S-50S ribosomal subunit interface and may play a role in the structure and function of the aminoacyl-tRNA binding site. The protein is Large ribosomal subunit protein bL19 of Pseudomonas aeruginosa (strain LESB58).